The chain runs to 457 residues: Biphenyl dioxygenase subunit alpha (457 aa).

Positions 58–174 (WLMLGHETHI…VETYKGLVFA (117 aa)) constitute a Rieske domain. [2Fe-2S] cluster contacts are provided by C100, H102, C120, and H123. Residues H233 and H239 each contribute to the Fe cation site.

It belongs to the bacterial ring-hydroxylating dioxygenase alpha subunit family. As to quaternary structure, heterohexamer consisting of three BphA subunits and three BphE subunits. A ferredoxin (BphF) and a ferredoxin reductase (BphG) must be present to obtain activity. Requires [2Fe-2S] cluster as cofactor. Fe cation is required as a cofactor.

The catalysed reaction is biphenyl + NADH + O2 + H(+) = (2R,3S)-3-phenylcyclohexa-3,5-diene-1,2-diol + NAD(+). It participates in xenobiotic degradation; biphenyl degradation; 2-hydroxy-2,4-pentadienoate and benzoate from biphenyl: step 1/4. The sequence is that of Biphenyl dioxygenase subunit alpha (bphA) from Comamonas testosteroni (Pseudomonas testosteroni).